Reading from the N-terminus, the 191-residue chain is Calcium and integrin-binding protein 1 (191 aa).

A lipid anchor (N-myristoyl glycine) is attached at Gly2. 2 consecutive EF-hand domains span residues 103-138 (TPDIKSHYAFRIFDFDDDGTLNREDLSRLVNCLTGE) and 148-183 (EMKQLIDNILEESDIDRDGTINLSEFQHVISRSPDF). Ca(2+) is bound by residues Asp116, Asp118, Asp120, Thr122, Asp127, Asp161, Asp163, Asp165, Thr167, and Glu172. Asp118 carries the post-translational modification Phosphoserine.

In terms of assembly, monomer. Interacts with MYO1C. Interacts (via C-terminal region) with PPP3R1 and CACNA1C; the interactions increase upon cardiomyocytes hypertrophy. Interacts with the heterodimeric integrin alpha-IIb/beta3 (ITGA2B-ITGB3). Interacts with ITGA2B (via cytoplasmic domain); the interaction is direct and calcium-dependent. Interacts with the protein kinases PLK2/SNK and PRKDC (via the region immediately upstream of the kinase domain). Interacts with PLK3; the interaction inhibits PLK3 kinase activity. Interacts with PSEN2. Interacts (via C-terminus) with F8. Interacts with NBR1 (via C-terminus). Interacts with FEZ1 (via C-terminus). Interacts with UBR5 (via C-terminus); the interaction is sensitive to DNA damage, and may target CIB1 for ubiquitin-mediated degradation. Interacts with IFI6; the interaction is direct. Interacts with BCL2. Interacts with ITPR3; the interaction occurs in a calcium-dependent manner. Interacts with PTK2/FAK1. Interacts with MAP3K5; the interaction inhibits MAP3K5 activation by phosphorylation, and its subsequent interaction with TRAF2. Isoform 2 interacts with PRKD2 (via N-terminal AP-rich region), PTK2/FAK1 and PAK1. Interacts with TAS1R2 (via C-terminus); the interaction is independent of the myristoylation state of CIB1. Interacts (via C-terminal region) with STMN2 (via the N-terminal region); the interaction is direct, occurs in a calcium-dependent manner and attenuates the STMN2-induced neurite outgrowth inhibition. Interacts with SPHK1, the interaction occurs in a calcium-dependent manner. Interacts with ITGA2B (via C-terminal cytoplasmic tail); the interaction occurs upon platelet aggregation and is stabilized/increased in a calcium and magnesium-dependent manner. Interacts with PAK1 (via N-terminal region); the interaction is direct and occurs in a calcium-dependent manner. Interacts with RAC3 (via C-terminal region); the interaction induces their association with the cytoskeleton upon alpha-IIb/beta3 integrin-mediated adhesion. Interacts with ITGA5 and ITGAV. Interacts and forms a complex with TMC6 and TMC8; the interaction stabilizes each component of the complex. As to quaternary structure, (Microbial infection) Interacts with human papillomavirus 4/HPV4 protein E8, human papillomavirus 5/HPV5 protein E1, and human papillomavirus 16/HPV16 proteins E2 and E5. Phosphorylation of isoform 2 at Ser-118 by PRKD2 increases its ability to stimulate tumor angiogenesis. In terms of tissue distribution, ubiquitously expressed. Expressed in the epidermis, hair follicles and keratinocytes. Detected in platelets and in cell lines of megakaryocytic and erythrocytic lineages. Both isoform 1 and isoform 2 are detected in various cancer cell lines, with isoform 2 being the predominant form (at protein level).

The protein resides in the membrane. It is found in the cell membrane. It localises to the sarcolemma. The protein localises to the apical cell membrane. Its subcellular location is the cell projection. The protein resides in the ruffle membrane. It is found in the filopodium tip. It localises to the growth cone. The protein localises to the lamellipodium. Its subcellular location is the cytoplasm. The protein resides in the cytoskeleton. It is found in the microtubule organizing center. It localises to the centrosome. The protein localises to the perinuclear region. Its subcellular location is the nucleus. The protein resides in the neuron projection. It is found in the perikaryon. It localises to the golgi apparatus. The protein localises to the trans-Golgi network. In terms of biological role, calcium-binding protein that plays a role in the regulation of numerous cellular processes, such as cell differentiation, cell division, cell proliferation, cell migration, thrombosis, angiogenesis, cardiac hypertrophy and apoptosis. Involved in bone marrow megakaryocyte differentiation by negatively regulating thrombopoietin-mediated signaling pathway. Participates in the endomitotic cell cycle of megakaryocyte, a form of mitosis in which both karyokinesis and cytokinesis are interrupted. Plays a role in integrin signaling by negatively regulating alpha-IIb/beta3 activation in thrombin-stimulated megakaryocytes preventing platelet aggregation. Up-regulates PTK2/FAK1 activity, and is also needed for the recruitment of PTK2/FAK1 to focal adhesions; it thus appears to play an important role in focal adhesion formation. Positively regulates cell migration on fibronectin in a CDC42-dependent manner, the effect being negatively regulated by PAK1. Functions as a negative regulator of stress activated MAP kinase (MAPK) signaling pathways. Down-regulates inositol 1,4,5-trisphosphate receptor-dependent calcium signaling. Involved in sphingosine kinase SPHK1 translocation to the plasma membrane in a N-myristoylation-dependent manner preventing TNF-alpha-induced apoptosis. Regulates serine/threonine-protein kinase PLK3 activity for proper completion of cell division progression. Plays a role in microtubule (MT) dynamics during neuronal development; disrupts the MT depolymerization activity of STMN2 attenuating NGF-induced neurite outgrowth and the MT reorganization at the edge of lamellipodia. Promotes cardiomyocyte hypertrophy via activation of the calcineurin/NFAT signaling pathway. Stimulates calcineurin PPP3R1 activity by mediating its anchoring to the sarcolemma. In ischemia-induced (pathological or adaptive) angiogenesis, stimulates endothelial cell proliferation, migration and microvessel formation by activating the PAK1 and ERK1/ERK2 signaling pathway. Also promotes cancer cell survival and proliferation. May regulate cell cycle and differentiation of spermatogenic germ cells, and/or differentiation of supporting Sertoli cells. Forms a complex with TMC6/EVER1 and TMC8/EVER2 in lymphocytes and keratynocytes where CIB1 stabilizes TMC6 and TMC8 levels and reciprocally. Functionally, acts as a restriction factor that promotes keratinocyte-intrinsic immunity to human beta-papillomaviruses (HPVs). Its function is as follows. Plays a regulatory role in angiogenesis and tumor growth by mediating PKD/PRKD2-induced vascular endothelial growth factor A (VEGFA) secretion. This chain is Calcium and integrin-binding protein 1 (CIB1), found in Homo sapiens (Human).